Reading from the N-terminus, the 1225-residue chain is Hybrid signal transduction histidine kinase C (1225 aa).

Residues 8–28 form a helical membrane-spanning segment; it reads GFLLSTLFFTIISIILFYFFI. Residues 313-356 show a composition bias toward low complexity; that stretch reads LSPRSLSSSSSSSPSSSNNNGNTNNSGSLSPRSSNSNGSAVSPR. The interval 313–407 is disordered; that stretch reads LSPRSLSSSS…SNGTISSPRT (95 aa). A compositionally biased stretch (polar residues) spans 357–368; the sequence is NVSSNSMSPRGQ. Low complexity predominate over residues 370–388; the sequence is SDRSISSPRGSSSSSSSSS. A compositionally biased stretch (polar residues) spans 389 to 407; sequence NELAISPRNSNGTISSPRT. Positions 426–653 constitute a Histidine kinase domain; that stretch reads HLSHELRTPI…TFHFVIPLET (228 aa). His-429 is modified (phosphohistidine; by autocatalysis). The Response regulatory 1 domain occupies 669-784; that stretch reads SVLVVDKNPY…HLVACLLASM (116 aa). The residue at position 721 (Asp-721) is a 4-aspartylphosphate. 3 disordered regions span residues 809–832, 941–974, and 1021–1076; these read NNIN…SVYG, DDDS…DELN, and YLSP…PRAP. Over residues 945 to 954 the composition is skewed to polar residues; the sequence is NNYCNTTGTM. Over residues 1023–1037 the composition is skewed to low complexity; the sequence is SPRSMNNNNGNNDNG. Polar residues predominate over residues 1058-1072; it reads TSDTSSLAQSPNSLS. The region spanning 1078 to 1200 is the Response regulatory 2 domain; sequence KIMILDDNPV…CLELILRKWE (123 aa). Asp-1127 bears the 4-aspartylphosphate mark.

It localises to the membrane. It catalyses the reaction ATP + protein L-histidine = ADP + protein N-phospho-L-histidine.. In terms of biological role, acts in a signal transduction pathway that regulates the slug versus culmination choice. Believed to be the first component of a phosphorelay that couples the sensing of ammonia to the modulation of PKA activity and hence activates culmination and spore germination. Ammonium transporters amtA and amtC are thought to respectively activate and inhibit dhkC phosphorelay. This protein probably undergoes an ATP-dependent autophosphorylation at conserved His residue in the kinase core, and a phosphoryl group is then transferred to a conserved aspartate residue in the receiver domain. The chain is Hybrid signal transduction histidine kinase C (dhkC) from Dictyostelium discoideum (Social amoeba).